A 549-amino-acid polypeptide reads, in one-letter code: MTDTNWKQNLNLPPKDTRPQTEDVLNTKGKSFEDFNLKRELLMGIFEAGFEKPSPIQEESIPMALAGRDILARAKNGTGKTASFIIPCLQLVKPKLNKVQALILVPTRELALQTSQVVRTLGKHVGTQCMVTTGGTSLRDDIVRLHDPVHILVGTPGRVLDLAARKVVDLSECPLFVMDEADKMLSREFKGIIEQILEFFPPNRQALLFSATFPLAVKSFMDKHLTKPYEINLMDELTLKGISQFYAFVEEKQKLHCLNTLFSKLQINQSIIFCNSTNRVELLAKKITELGYSCYYSHAKMPQQARNKVFHEFRQGKVRNLVCSDLLTRGIDIQAVNVVINFDFPKTAETYLHRIGRSGRFGHLGLAINLMSWNDRYSLYKIEQELGTEIKPIPATIDKSLYVAENADAVPRPFRIDELPKGNETVHNKGYQYKGQPVKDENSGSSSQQQQQPPPQQQQQQSTSPPQQQPQQQQQQPNPQHQFAPHPNGQFPPYPQQFHQPGAIPPQQFNGYPPYPQYPPQFAGYPGQPPQLPQGQQQHAQAQNPAQQY.

Over residues 1 to 11 (MTDTNWKQNLN) the composition is skewed to polar residues. The interval 1 to 24 (MTDTNWKQNLNLPPKDTRPQTEDV) is disordered. A Q motif motif is present at residues 30-58 (KSFEDFNLKRELLMGIFEAGFEKPSPIQE). The Helicase ATP-binding domain maps to 61-231 (IPMALAGRDI…DKHLTKPYEI (171 aa)). 74–81 (AKNGTGKT) contributes to the ATP binding site. The short motif at 179–182 (DEAD) is the DEAD box element. One can recognise a Helicase C-terminal domain in the interval 241–401 (GISQFYAFVE…PIPATIDKSL (161 aa)). A compositionally biased stretch (basic and acidic residues) spans 414–427 (FRIDELPKGNETVH). Positions 414–549 (FRIDELPKGN…AQAQNPAQQY (136 aa)) are disordered. Low complexity-rich tracts occupy residues 445–482 (SSSQ…PQHQ), 496–512 (QQFH…FNGY), and 533–549 (PQGQ…AQQY).

Belongs to the DEAD box helicase family. DDX6/DHH1 subfamily.

Its subcellular location is the cytoplasm. It is found in the P-body. It carries out the reaction ATP + H2O = ADP + phosphate + H(+). In terms of biological role, ATP-dependent RNA helicase involved in mRNA turnover, and more specifically in mRNA decapping. Is involved in G1/S DNA-damage checkpoint recovery, probably through the regulation of the translational status of a subset of mRNAs. May also have a role in translation and mRNA nuclear export. This chain is ATP-dependent RNA helicase DHH1 (DHH1), found in Candida albicans (strain SC5314 / ATCC MYA-2876) (Yeast).